A 364-amino-acid chain; its full sequence is Acidic fibroblast growth factor intracellular-binding protein (364 aa).

Thr-2 carries the post-translational modification N-acetylthreonine.

As to quaternary structure, binds to internalized FGF1; this interaction is increased in the presence of CSNKB, suggesting a possible cooperative interaction between CSNKB and FIBP in binding to FGF1. Highly expressed in heart, skeletal muscle and pancreas. Expressed at lower levels in brain. Also found in placenta, liver and kidney.

Its subcellular location is the nucleus. The protein resides in the endomembrane system. Its function is as follows. May be involved in mitogenic function of FGF1. May mediate with IER2 FGF-signaling in the establishment of laterality in the embryo. The chain is Acidic fibroblast growth factor intracellular-binding protein (FIBP) from Homo sapiens (Human).